Consider the following 262-residue polypeptide: Small ribosomal subunit protein uS2 (262 aa).

Belongs to the universal ribosomal protein uS2 family.

This chain is Small ribosomal subunit protein uS2, found in Azobacteroides pseudotrichonymphae genomovar. CFP2.